The primary structure comprises 207 residues: Small ribosomal subunit protein uS4 (207 aa).

The 61-residue stretch at 96 to 156 (SRLDNVVYRM…KKSHNQSRIY (61 aa)) folds into the S4 RNA-binding domain.

It belongs to the universal ribosomal protein uS4 family. As to quaternary structure, part of the 30S ribosomal subunit. Contacts protein S5. The interaction surface between S4 and S5 is involved in control of translational fidelity.

One of the primary rRNA binding proteins, it binds directly to 16S rRNA where it nucleates assembly of the body of the 30S subunit. Its function is as follows. With S5 and S12 plays an important role in translational accuracy. The chain is Small ribosomal subunit protein uS4 from Blochmanniella floridana.